A 238-amino-acid chain; its full sequence is Large ribosomal subunit protein uL1 (238 aa).

The protein belongs to the universal ribosomal protein uL1 family. In terms of assembly, part of the 50S ribosomal subunit.

Its function is as follows. Binds directly to 23S rRNA. The L1 stalk is quite mobile in the ribosome, and is involved in E site tRNA release. Protein L1 is also a translational repressor protein, it controls the translation of the L11 operon by binding to its mRNA. This chain is Large ribosomal subunit protein uL1, found in Trichodesmium erythraeum (strain IMS101).